Consider the following 60-residue polypeptide: MSQFDTNKLNEIDINKVSLSEVISRPNPNKQVVELNRTSLYWGLLLIFVLAVLFSSYIFN.

A helical membrane pass occupies residues 39-59; sequence SLYWGLLLIFVLAVLFSSYIF.

This sequence belongs to the PsbL family. In terms of assembly, PSII is composed of 1 copy each of membrane proteins PsbA, PsbB, PsbC, PsbD, PsbE, PsbF, PsbH, PsbI, PsbJ, PsbK, PsbL, PsbM, PsbT, PsbX, PsbY, PsbZ, Psb30/Ycf12, at least 3 peripheral proteins of the oxygen-evolving complex and a large number of cofactors. It forms dimeric complexes.

It localises to the plastid. It is found in the chloroplast thylakoid membrane. In terms of biological role, one of the components of the core complex of photosystem II (PSII). PSII is a light-driven water:plastoquinone oxidoreductase that uses light energy to abstract electrons from H(2)O, generating O(2) and a proton gradient subsequently used for ATP formation. It consists of a core antenna complex that captures photons, and an electron transfer chain that converts photonic excitation into a charge separation. This subunit is found at the monomer-monomer interface and is required for correct PSII assembly and/or dimerization. In Oedogonium cardiacum (Filamentous green alga), this protein is Photosystem II reaction center protein L.